The chain runs to 254 residues: Arginine/ornithine transport ATP-binding protein AotP (254 aa).

An ABC transporter domain is found at 4-249 (LEVQDLHKRY…PQSDRLKQFL (246 aa)). An ATP-binding site is contributed by 36–43 (GSSGSGKS).

The protein belongs to the ABC transporter superfamily.

Its subcellular location is the cell inner membrane. Functionally, part of the arginine-inducible binding-protein-dependent transport system for arginine and ornithine. Probably responsible for energy coupling to the transport system. This Pseudomonas aeruginosa (strain ATCC 15692 / DSM 22644 / CIP 104116 / JCM 14847 / LMG 12228 / 1C / PRS 101 / PAO1) protein is Arginine/ornithine transport ATP-binding protein AotP (aotP).